Consider the following 421-residue polypeptide: Vasopressin V1b receptor (421 aa).

Over M1–K35 the chain is Extracellular. N21 carries N-linked (GlcNAc...) asparagine glycosylation. Residues V36–L59 traverse the membrane as a helical segment. Topologically, residues G60–L71 are cytoplasmic. A helical membrane pass occupies residues F72–L93. The Extracellular segment spans residues W94 to R108. C107 and C186 are disulfide-bonded. The helical transmembrane segment at A109 to L130 threads the bilayer. The Cytoplasmic portion of the chain corresponds to D131–Y151. Residues P152 to S173 traverse the membrane as a helical segment. The Extracellular segment spans residues L174–W202. Residues T203 to C223 form a helical membrane-spanning segment. The Cytoplasmic portion of the chain corresponds to H224–T280. A helical membrane pass occupies residues F281–W300. The Extracellular portion of the chain corresponds to S301–T318. Residues I319–F338 form a helical membrane-spanning segment. The Cytoplasmic segment spans residues N339 to S421. Residues K399 to S421 are disordered.

It belongs to the G-protein coupled receptor 1 family. Vasopressin/oxytocin receptor subfamily.

Its subcellular location is the cell membrane. Its function is as follows. Receptor for arginine vasopressin. The activity of this receptor is mediated by G proteins which activate a phosphatidyl-inositol-calcium second messenger system. The polypeptide is Vasopressin V1b receptor (Avpr1b) (Mus musculus (Mouse)).